The following is an 89-amino-acid chain: Phosphoribulokinase, chloroplastic (89 aa).

A disordered region spans residues 1 to 22 (LTSVFGGAAEPPRGGNPDSNTL).

The protein belongs to the phosphoribulokinase family.

The protein localises to the plastid. Its subcellular location is the chloroplast. It carries out the reaction D-ribulose 5-phosphate + ATP = D-ribulose 1,5-bisphosphate + ADP + H(+). Its pathway is carbohydrate biosynthesis; Calvin cycle. Light regulated via thioredoxin by reversible oxidation/reduction of sulfhydryl/disulfide groups. The polypeptide is Phosphoribulokinase, chloroplastic (Vitis sp. (Grape)).